The primary structure comprises 129 residues: EFLLTKIGRQQGRPLTVTDSAIRLLMSHRWPGNVRDVENCLERSAIMSEDGTITRDVVSLTGVDNESPPLAAPLPEVNLADENLDDRERVIAALEQAGWVQAKAARLLGMTPRQIAYRIQTLNIHMRKI.

The Sigma-54 factor interaction domain maps to 1 to 46 (EFLLTKIGRQQGRPLTVTDSAIRLLMSHRWPGNVRDVENCLERSAI). Positions 101–129 (QAKAARLLGMTPRQIAYRIQTLNIHMRKI) form a DNA-binding region, H-T-H motif.

Interacts with sigma-54.

Required for activation of most nif operons, which are directly involved in nitrogen fixation. The chain is Nif-specific regulatory protein (nifA) from Azotobacter chroococcum mcd 1.